Reading from the N-terminus, the 944-residue chain is Bifunctional uridylyltransferase/uridylyl-removing enzyme (944 aa).

Positions 1–371 (MRDLDFTNIL…RFTHRNRKIA (371 aa)) are uridylyltransferase. Positions 372 to 727 (GSVEFVEDRG…VRTDSFHAIT (356 aa)) are uridylyl-removing. One can recognise an HD domain in the interval 488–604 (VDEHLIRTVD…TDFADRVQSL (117 aa)). ACT domains lie at 728-809 (EITV…EVIA) and 839-918 (VIEV…LRER). Residues 911–944 (EEDELRERMPSGIIAPAATARTPPASEKKAGSPI) are disordered. Residues 925–935 (APAATARTPPA) show a composition bias toward low complexity.

This sequence belongs to the GlnD family. Mg(2+) is required as a cofactor.

The catalysed reaction is [protein-PII]-L-tyrosine + UTP = [protein-PII]-uridylyl-L-tyrosine + diphosphate. It catalyses the reaction [protein-PII]-uridylyl-L-tyrosine + H2O = [protein-PII]-L-tyrosine + UMP + H(+). With respect to regulation, uridylyltransferase (UTase) activity is inhibited by glutamine, while glutamine likely activates uridylyl-removing (UR) activity. In terms of biological role, modifies, by uridylylation and deuridylylation, the PII regulatory proteins GlnB and GlnK, in response to the nitrogen status of the cell that GlnD senses through the glutamine level. Under low glutamine levels, catalyzes the conversion of the PII proteins and UTP to PII-UMP and PPi, while under higher glutamine levels, GlnD likely hydrolyzes PII-UMP to PII and UMP (deuridylylation). Thus, controls uridylylation state and activity of the PII proteins, and plays an important role in the regulation of nitrogen metabolism. This chain is Bifunctional uridylyltransferase/uridylyl-removing enzyme, found in Rhizobium leguminosarum bv. viciae.